Here is a 438-residue protein sequence, read N- to C-terminus: Dihydrolipoyllysine-residue acetyltransferase component of pyruvate dehydrogenase complex (438 aa).

A Lipoyl-binding domain is found at 1-76 (MFKVKFADIG…KVGDVVMEIE (76 aa)). N6-lipoyllysine is present on Lys-42. One can recognise a Peripheral subunit-binding (PSBD) domain in the interval 132–169 (KATPLARKVAADLNIDLSLVTPTGPNQRILVADIKNHQ). Residues 172 to 181 (STQLASQPIS) are compositionally biased toward polar residues. Positions 172-192 (STQLASQPISQPAPTPSPSAH) are disordered. Residue His-411 is part of the active site.

This sequence belongs to the 2-oxoacid dehydrogenase family. Forms a 24-polypeptide structural core with octahedral symmetry. The cofactor is (R)-lipoate.

It carries out the reaction N(6)-[(R)-dihydrolipoyl]-L-lysyl-[protein] + acetyl-CoA = N(6)-[(R)-S(8)-acetyldihydrolipoyl]-L-lysyl-[protein] + CoA. The pyruvate dehydrogenase complex catalyzes the overall conversion of pyruvate to acetyl-CoA and CO(2). It contains multiple copies of three enzymatic components: pyruvate dehydrogenase (E1), dihydrolipoamide acetyltransferase (E2) and lipoamide dehydrogenase (E3). This chain is Dihydrolipoyllysine-residue acetyltransferase component of pyruvate dehydrogenase complex (pdhC), found in Mycoplasma capricolum subsp. capricolum (strain California kid / ATCC 27343 / NCTC 10154).